A 227-amino-acid polypeptide reads, in one-letter code: Cytochrome c oxidase subunit 2 (227 aa).

The Mitochondrial intermembrane portion of the chain corresponds to 1–14; sequence MAHAAQVGLQDATS. Residues 15–45 traverse the membrane as a helical segment; that stretch reads PIMEELIIFHDHALMIIFLICFLVLYALFLT. Residues 46–59 are Mitochondrial matrix-facing; sequence LTTKLTNTSISDAQ. The chain crosses the membrane as a helical span at residues 60-87; sequence EMETVWTILPAIILVLIALPSLRILYMT. Topologically, residues 88–227 are mitochondrial intermembrane; it reads DEVNDPSFTI…IFEMGPVFTL (140 aa). Cu cation is bound by residues H161, C196, E198, C200, H204, and M207. E198 is a Mg(2+) binding site.

It belongs to the cytochrome c oxidase subunit 2 family. As to quaternary structure, component of the cytochrome c oxidase (complex IV, CIV), a multisubunit enzyme composed of 14 subunits. The complex is composed of a catalytic core of 3 subunits MT-CO1, MT-CO2 and MT-CO3, encoded in the mitochondrial DNA, and 11 supernumerary subunits COX4I, COX5A, COX5B, COX6A, COX6B, COX6C, COX7A, COX7B, COX7C, COX8 and NDUFA4, which are encoded in the nuclear genome. The complex exists as a monomer or a dimer and forms supercomplexes (SCs) in the inner mitochondrial membrane with NADH-ubiquinone oxidoreductase (complex I, CI) and ubiquinol-cytochrome c oxidoreductase (cytochrome b-c1 complex, complex III, CIII), resulting in different assemblies (supercomplex SCI(1)III(2)IV(1) and megacomplex MCI(2)III(2)IV(2)). Found in a complex with TMEM177, COA6, COX18, COX20, SCO1 and SCO2. Interacts with TMEM177 in a COX20-dependent manner. Interacts with COX20. Interacts with COX16. Cu cation serves as cofactor.

The protein localises to the mitochondrion inner membrane. It carries out the reaction 4 Fe(II)-[cytochrome c] + O2 + 8 H(+)(in) = 4 Fe(III)-[cytochrome c] + 2 H2O + 4 H(+)(out). Its function is as follows. Component of the cytochrome c oxidase, the last enzyme in the mitochondrial electron transport chain which drives oxidative phosphorylation. The respiratory chain contains 3 multisubunit complexes succinate dehydrogenase (complex II, CII), ubiquinol-cytochrome c oxidoreductase (cytochrome b-c1 complex, complex III, CIII) and cytochrome c oxidase (complex IV, CIV), that cooperate to transfer electrons derived from NADH and succinate to molecular oxygen, creating an electrochemical gradient over the inner membrane that drives transmembrane transport and the ATP synthase. Cytochrome c oxidase is the component of the respiratory chain that catalyzes the reduction of oxygen to water. Electrons originating from reduced cytochrome c in the intermembrane space (IMS) are transferred via the dinuclear copper A center (CU(A)) of subunit 2 and heme A of subunit 1 to the active site in subunit 1, a binuclear center (BNC) formed by heme A3 and copper B (CU(B)). The BNC reduces molecular oxygen to 2 water molecules using 4 electrons from cytochrome c in the IMS and 4 protons from the mitochondrial matrix. The chain is Cytochrome c oxidase subunit 2 (MT-CO2) from Pan paniscus (Pygmy chimpanzee).